We begin with the raw amino-acid sequence, 232 residues long: Cell cycle response regulator CtrA (232 aa).

Positions 2 to 116 constitute a Response regulatory domain; it reads RVLLIEDDSA…ELIARIHAIV (115 aa). Asp-51 is subject to 4-aspartylphosphate. Positions 124 to 223 form a DNA-binding region, ompR/PhoB-type; it reads QSVITTGDLV…VWGRGYVLRE (100 aa).

In terms of assembly, forms an asymmetric heterotetramer with ChpT (2:2). There are at least two modes of interaction between ChpT and CtrA, only one of which is competent to catalyze His-Asp phosphoryl transfer. In terms of processing, is phosphorylated by ChpT-P on Asp-51.

It localises to the cytoplasm. In terms of biological role, component of a regulatory phosphorelay system that controls B.abortus cell growth, division, and intracellular survival inside mammalian host cells. This signaling pathway is composed of CckA, ChpT, CtrA and CpdR. CtrA is a response regulator substrate of ChpT. When phosphorylated, directly regulates the expression of ccrM. Is also probably involved in the transcriptional regulation of rpoD, pleC, minC and ftsE genes. This is Cell cycle response regulator CtrA (ctrA) from Brucella abortus (strain S19).